The following is a 346-amino-acid chain: Probable choline kinase 3 (346 aa).

The ATP site is built by Arg-71, Gln-207, and Asp-224.

Belongs to the choline/ethanolamine kinase family.

The enzyme catalyses choline + ATP = phosphocholine + ADP + H(+). It functions in the pathway phospholipid metabolism; phosphatidylcholine biosynthesis; phosphocholine from choline: step 1/1. Its function is as follows. Involved in phospholipid biosynthesis. Catalyzes the first step in phosphatidylcholine biosynthesis. The chain is Probable choline kinase 3 from Arabidopsis thaliana (Mouse-ear cress).